A 246-amino-acid chain; its full sequence is uncharacterized protein (246 aa).

It belongs to the BtpA family.

This is an uncharacterized protein from Archaeoglobus fulgidus (strain ATCC 49558 / DSM 4304 / JCM 9628 / NBRC 100126 / VC-16).